A 94-amino-acid chain; its full sequence is Secretoglobin family 1C member 1 (94 aa).

The signal sequence occupies residues 1-22 (MKGSSALLVALTVLCICGLTRA).

It belongs to the secretoglobin family. In terms of tissue distribution, expressed in the olfactory mucosa.

It is found in the secreted. The polypeptide is Secretoglobin family 1C member 1 (Scgb1c1) (Rattus norvegicus (Rat)).